The sequence spans 78 residues: Ferredoxin 7Fe (78 aa).

4Fe-4S ferredoxin-type domains are found at residues 2-29 (AYVI…IHEG) and 31-60 (DQYY…HEDF). The [3Fe-4S] cluster site is built by Cys9 and Cys17. [4Fe-4S] cluster-binding residues include Cys21, Cys40, Cys43, and Cys46. Cys50 contacts [3Fe-4S] cluster.

Monomer. The cofactor is [4Fe-4S] cluster. [3Fe-4S] cluster is required as a cofactor.

This chain is Ferredoxin 7Fe (fdxA), found in Hydrogenibacillus schlegelii (Bacillus schlegelii).